Consider the following 577-residue polypeptide: MASLVLSLRIAPSTPPLGLGGGRFRGRRGAVACRAATFQQLDAVAVREEESKFKAGAAEGCNILPLKRCIFSDHLTPVLAYRCLVREDDREAPSFLFESVEQGSEGTNVGRYSVVGAQPAMEIVAKANHVTVMDHKMKSRREQFAPDPMKIPRSIMEQWNPQIVEGLPDAFCGGWVGFFSYDTVRYVETKKLPFSNAPEDDRNLPDIHLGLYNDIVVFDHVEKKTHVIHWVRVDCHESVDEAYEDGKNQLEALLSRLHSVNVPTLTAGSVKLNVGQFGSALQKSSMSREDYKKAVVQAKEHILAGDIFQVVLSQRFERRTFADPFEVYRALRIVNPSPYMAYLQARGCILVASSPEILTRVEKRTIVNRPLAGTIRRGKSKAEDKVLEQLLLSDGKQCAEHIMLVDLGRNDVGKVSKPGSVKVEKLMNVERYSHVMHISSTVTGELRDDLTCWDALRAALPVGTVSGAPKVRAMELIDQMEGKMRGPYSGGFGGVSFRGDMDIALALRTIVFPTGSRFDTMYSYTDKNARQEWVAHLQAGAGIVADSKPDDEHQECLNKAAGLARAIDLAESTFVDE.

The N-terminal 34 residues, 1–34, are a transit peptide targeting the chloroplast; sequence MASLVLSLRIAPSTPPLGLGGGRFRGRRGAVACR.

Belongs to the anthranilate synthase component I family. Heterotetramer consisting of two non-identical subunits: a beta subunit and a large alpha subunit.

It localises to the plastid. It is found in the chloroplast. It carries out the reaction chorismate + L-glutamine = anthranilate + pyruvate + L-glutamate + H(+). It functions in the pathway amino-acid biosynthesis; L-tryptophan biosynthesis; L-tryptophan from chorismate: step 1/5. With respect to regulation, feedback inhibition by tryptophan. In terms of biological role, part of a heterotetrameric complex that catalyzes the two-step biosynthesis of anthranilate, an intermediate in the biosynthesis of L-tryptophan. In the first step, the glutamine-binding beta subunit of anthranilate synthase (AS) provides the glutamine amidotransferase activity which generates ammonia as a substrate that, along with chorismate, is used in the second step, catalyzed by the large alpha subunit of AS to produce anthranilate. This is Anthranilate synthase alpha subunit 1, chloroplastic from Oryza sativa subsp. japonica (Rice).